The primary structure comprises 317 residues: Protein phosphatase 1 regulatory subunit 3C-B (317 aa).

Residues 150–258 form the CBM21 domain; sequence RNRLKKNLVC…NNDGKNYKLV (109 aa).

As to quaternary structure, interacts with PPP1CC catalytic subunit of PP1 and associates with glycogen. Forms complexes with glycogen phosphorylase, glycogen synthase and phosphorylase kinase which is necessary for its regulation of PP1 activity.

Its function is as follows. Acts as a glycogen-targeting subunit for PP1 and regulates its activity. Activates glycogen synthase, reduces glycogen phosphorylase activity and limits glycogen breakdown. The polypeptide is Protein phosphatase 1 regulatory subunit 3C-B (ppp1r3cb) (Danio rerio (Zebrafish)).